The following is a 404-amino-acid chain: Probable tRNA sulfurtransferase (404 aa).

Positions 60–165 (RSVIEALKPV…DEAAYLSHED (106 aa)) constitute a THUMP domain. Residues 183-184 (ML), 208-209 (HF), arginine 265, glycine 287, and glutamine 296 contribute to the ATP site.

This sequence belongs to the ThiI family.

It localises to the cytoplasm. It carries out the reaction [ThiI sulfur-carrier protein]-S-sulfanyl-L-cysteine + a uridine in tRNA + 2 reduced [2Fe-2S]-[ferredoxin] + ATP + H(+) = [ThiI sulfur-carrier protein]-L-cysteine + a 4-thiouridine in tRNA + 2 oxidized [2Fe-2S]-[ferredoxin] + AMP + diphosphate. The catalysed reaction is [ThiS sulfur-carrier protein]-C-terminal Gly-Gly-AMP + S-sulfanyl-L-cysteinyl-[cysteine desulfurase] + AH2 = [ThiS sulfur-carrier protein]-C-terminal-Gly-aminoethanethioate + L-cysteinyl-[cysteine desulfurase] + A + AMP + 2 H(+). The protein operates within cofactor biosynthesis; thiamine diphosphate biosynthesis. Its function is as follows. Catalyzes the ATP-dependent transfer of a sulfur to tRNA to produce 4-thiouridine in position 8 of tRNAs, which functions as a near-UV photosensor. Also catalyzes the transfer of sulfur to the sulfur carrier protein ThiS, forming ThiS-thiocarboxylate. This is a step in the synthesis of thiazole, in the thiamine biosynthesis pathway. The sulfur is donated as persulfide by IscS. The sequence is that of Probable tRNA sulfurtransferase from Streptococcus equi subsp. equi (strain 4047).